The following is a 411-amino-acid chain: Peptidyl-prolyl cis-trans isomerase (411 aa).

Serine 2 bears the N-acetylserine mark. 2 disordered regions span residues 54–127 (IIKR…TLSP) and 160–302 (NYVK…PKSK). The span at 61–87 (FEDDDFLGGDFDEDEIDEESSEEEEEE) shows a compositional bias: acidic residues. Serine 80 and serine 81 each carry phosphoserine. Threonine 89 is modified (phosphothreonine). Composition is skewed to acidic residues over residues 103 to 118 (ESED…DEFQ) and 173 to 242 (EGED…EEQK). Tyrosine 184 carries the post-translational modification Phosphotyrosine; by CK2. The residue at position 186 (serine 186) is a Phosphoserine; by CK2. Residues 251 to 260 (KSKKEKKRKH) show a composition bias toward basic residues. A Nuclear localization signal motif is present at residues 256–271 (KKRKHEEKEEEKKAKK). Residues 261-296 (EEKEEEKKAKKVKKVEFKKDLEEGPTKPKSKKEQDK) are compositionally biased toward basic and acidic residues. The 88-residue stretch at 324–411 (GARVGMRYIG…FDVKLVSMKN (88 aa)) folds into the PPIase FKBP-type domain.

Belongs to the FKBP-type PPIase family. FKBP3/4 subfamily. As to quaternary structure, interacts with NOP53. In terms of processing, phosphorylated at tyrosine and dephosphorylated by the phosphotyrosine-specific phosphoprotein phosphatase PTP1.

It localises to the nucleus. The protein resides in the nucleolus. It carries out the reaction [protein]-peptidylproline (omega=180) = [protein]-peptidylproline (omega=0). Its activity is regulated as follows. Inhibited by both FK506 and rapamycin. Functionally, proline isomerase that belongs to an abundant class of enzymes that catalyze the cis-trans isomerization of X-Pro peptide bonds and can accelerate the refolding of proline-containing polypeptides. Specifically binds nuclear localization sequences. May be involved in the assembly or folding of ribosomal proteins. This chain is Peptidyl-prolyl cis-trans isomerase, found in Saccharomyces cerevisiae (strain ATCC 204508 / S288c) (Baker's yeast).